The primary structure comprises 338 residues: Holliday junction branch migration complex subunit RuvB (338 aa).

The interval 1–181 is large ATPase domain (RuvB-L); sequence MEERILTQNF…FGVINRLDYY (181 aa). ATP contacts are provided by residues L20, R21, G62, K65, T66, T67, 128–130, R171, Y181, and R218; that span reads EDF. Mg(2+) is bound at residue T66. The tract at residues 182-252 is small ATPAse domain (RuvB-S); the sequence is SVEELKEIIK…TANIALNMLG (71 aa). Residues 255 to 338 form a head domain (RuvB-H) region; it reads EMGLEEIDRK…YVEQRRIEDV (84 aa). 2 residues coordinate DNA: R310 and R315.

Belongs to the RuvB family. As to quaternary structure, homohexamer. Forms an RuvA(8)-RuvB(12)-Holliday junction (HJ) complex. HJ DNA is sandwiched between 2 RuvA tetramers; dsDNA enters through RuvA and exits via RuvB. An RuvB hexamer assembles on each DNA strand where it exits the tetramer. Each RuvB hexamer is contacted by two RuvA subunits (via domain III) on 2 adjacent RuvB subunits; this complex drives branch migration. In the full resolvosome a probable DNA-RuvA(4)-RuvB(12)-RuvC(2) complex forms which resolves the HJ.

It localises to the cytoplasm. It catalyses the reaction ATP + H2O = ADP + phosphate + H(+). In terms of biological role, the RuvA-RuvB-RuvC complex processes Holliday junction (HJ) DNA during genetic recombination and DNA repair, while the RuvA-RuvB complex plays an important role in the rescue of blocked DNA replication forks via replication fork reversal (RFR). RuvA specifically binds to HJ cruciform DNA, conferring on it an open structure. The RuvB hexamer acts as an ATP-dependent pump, pulling dsDNA into and through the RuvAB complex. RuvB forms 2 homohexamers on either side of HJ DNA bound by 1 or 2 RuvA tetramers; 4 subunits per hexamer contact DNA at a time. Coordinated motions by a converter formed by DNA-disengaged RuvB subunits stimulates ATP hydrolysis and nucleotide exchange. Immobilization of the converter enables RuvB to convert the ATP-contained energy into a lever motion, pulling 2 nucleotides of DNA out of the RuvA tetramer per ATP hydrolyzed, thus driving DNA branch migration. The RuvB motors rotate together with the DNA substrate, which together with the progressing nucleotide cycle form the mechanistic basis for DNA recombination by continuous HJ branch migration. Branch migration allows RuvC to scan DNA until it finds its consensus sequence, where it cleaves and resolves cruciform DNA. The chain is Holliday junction branch migration complex subunit RuvB from Caldanaerobacter subterraneus subsp. tengcongensis (strain DSM 15242 / JCM 11007 / NBRC 100824 / MB4) (Thermoanaerobacter tengcongensis).